The chain runs to 244 residues: Orotidine 5'-phosphate decarboxylase (244 aa).

Residues Asp14, Lys36, 63–72 (DLKFHDIPNT), Thr127, Arg188, Gln197, Gly217, and Arg218 each bind substrate. Lys65 functions as the Proton donor in the catalytic mechanism.

Belongs to the OMP decarboxylase family. Type 1 subfamily. In terms of assembly, homodimer.

The enzyme catalyses orotidine 5'-phosphate + H(+) = UMP + CO2. Its pathway is pyrimidine metabolism; UMP biosynthesis via de novo pathway; UMP from orotate: step 2/2. In terms of biological role, catalyzes the decarboxylation of orotidine 5'-monophosphate (OMP) to uridine 5'-monophosphate (UMP). This Syntrophotalea carbinolica (strain DSM 2380 / NBRC 103641 / GraBd1) (Pelobacter carbinolicus) protein is Orotidine 5'-phosphate decarboxylase.